Consider the following 539-residue polypeptide: Chaperone Ric-8A (539 aa).

This sequence belongs to the synembryn family.

The protein localises to the cytoplasm. Its subcellular location is the cell cortex. Functionally, chaperone that specifically binds and folds nascent G alpha proteins prior to G protein heterotrimer formation, promoting their stability and activity: folds GNAI1, GNAO1, GNA13 and GNAQ. Does not fold G(s) G-alpha proteins GNAS nor GNAL. Also acts as a guanine nucleotide exchange factor (GEF) for G alpha proteins by stimulating exchange of bound GDP for free GTP. This Xenopus tropicalis (Western clawed frog) protein is Chaperone Ric-8A (ric8a).